The sequence spans 620 residues: PAN2-PAN3 deadenylation complex subunit PAN3 (620 aa).

The C3H1-type zinc finger occupies Ser7–Asn36. Disordered stretches follow at residues Ala39 to Thr73 and Val95 to Pro168. 2 stretches are compositionally biased toward polar residues: residues Asn63–Thr73 and Thr101–Asn126. The pseudokinase domain stretch occupies residues Gln226–Ala482. Residues Arg274, Asp323 to Thr330, and Ser380 to Lys381 contribute to the ATP site. Residues Ile483 to Phe521 are a coiled coil. Residues Ile522–Lys620 form a knob domain region.

This sequence belongs to the protein kinase superfamily. PAN3 family. Homodimer. Forms a heterotrimer with a catalytic subunit PAN2 to form the poly(A)-nuclease (PAN) deadenylation complex. Interacts (via PAM-2 motif) with poly(A)-binding protein PAB1 (via PABC domain), conferring substrate specificity of the enzyme complex.

Its subcellular location is the cytoplasm. In terms of biological role, regulatory subunit of the poly(A)-nuclease (PAN) deadenylation complex, one of two cytoplasmic mRNA deadenylases involved in mRNA turnover. PAN specifically shortens poly(A) tails of RNA and the activity is stimulated by poly(A)-binding protein PAB1. PAN deadenylation is followed by rapid degradation of the shortened mRNA tails by the CCR4-NOT complex. Deadenylated mRNAs are then degraded by two alternative mechanisms, namely exosome-mediated 3'-5' exonucleolytic degradation, or deadenylation-dependent mRNA decaping and subsequent 5'-3' exonucleolytic degradation by XRN1. May also be involved in post-transcriptional maturation of mRNA poly(A) tails. PAN3 acts as a positive regulator for PAN activity, recruiting the catalytic subunit PAN2 to mRNA via its interaction with RNA and with PAB1. This Meyerozyma guilliermondii (strain ATCC 6260 / CBS 566 / DSM 6381 / JCM 1539 / NBRC 10279 / NRRL Y-324) (Yeast) protein is PAN2-PAN3 deadenylation complex subunit PAN3.